The following is a 303-amino-acid chain: Diaminopimelate epimerase (303 aa).

Substrate-binding residues include N15, Q47, and N67. C76 acts as the Proton donor in catalysis. Residues 77–78, N163, N197, and 215–216 contribute to the substrate site; these read GN and ER. Residue C224 is the Proton acceptor of the active site. 225 to 226 provides a ligand contact to substrate; sequence GS. Residues 278–303 form a disordered region; it reads FDPATGEWSRDTQGLQGSGNADRGAA.

The protein belongs to the diaminopimelate epimerase family. In terms of assembly, homodimer.

Its subcellular location is the cytoplasm. The catalysed reaction is (2S,6S)-2,6-diaminopimelate = meso-2,6-diaminopimelate. Its pathway is amino-acid biosynthesis; L-lysine biosynthesis via DAP pathway; DL-2,6-diaminopimelate from LL-2,6-diaminopimelate: step 1/1. Its function is as follows. Catalyzes the stereoinversion of LL-2,6-diaminopimelate (L,L-DAP) to meso-diaminopimelate (meso-DAP), a precursor of L-lysine and an essential component of the bacterial peptidoglycan. In Brucella melitensis biotype 1 (strain ATCC 23456 / CCUG 17765 / NCTC 10094 / 16M), this protein is Diaminopimelate epimerase.